The chain runs to 305 residues: Ribonuclease HIII (305 aa).

Residues 91–305 (WSVIGSDEVG…ANTQKAQKLL (215 aa)) enclose the RNase H type-2 domain. A divalent metal cation-binding residues include Asp97, Glu98, and Asp201.

This sequence belongs to the RNase HII family. RnhC subfamily. It depends on Mn(2+) as a cofactor. The cofactor is Mg(2+).

It localises to the cytoplasm. The catalysed reaction is Endonucleolytic cleavage to 5'-phosphomonoester.. Endonuclease that specifically degrades the RNA of RNA-DNA hybrids. The polypeptide is Ribonuclease HIII (Enterococcus faecalis (strain ATCC 700802 / V583)).